We begin with the raw amino-acid sequence, 875 residues long: GATOR2 complex protein MIOS (875 aa).

WD repeat units lie at residues 61 to 100, 111 to 155, 182 to 221, 223 to 261, 265 to 306, and 395 to 437; these read PYMK…NSKF, KHAR…TPDI, GQND…QKMF, NTKA…KPVL, EQPK…TPIG, and RLRA…KQYT. The C4-type zinc-finger motif lies at 735 to 781; that stretch reads VSCNFCGKSISYSCSAVPHQGRGFSQYGVSGSPTKSKVTSCPGCRKP. Zn(2+) contacts are provided by cysteine 737 and cysteine 740. Residues serine 759 and serine 766 each carry the phosphoserine modification. Positions 775, 778, 788, 827, 830, 832, 835, 838, 849, 854, and 858 each coordinate Zn(2+). The RING-type; atypical zinc finger occupies 782–863; sequence LPRCALCLIN…CTCKCMQLDT (82 aa).

This sequence belongs to the WD repeat mio family. As to quaternary structure, component of the GATOR2 subcomplex, composed of MIOS, SEC13, SEH1L, WDR24 and WDR59. The GATOR2 complex interacts with CASTOR1 and CASTOR2; the interaction is negatively regulated by arginine. CASTOR1 and CASTOR2 convey leucine availability via direct interaction with MIOS. The GATOR2 complex interacts with SESN1, SESN2 and SESN3; the interaction is negatively regulated by amino acids. Interacts with SAR1A and SAR1B; the interaction is direct, disrupted by leucine and mediates the interaction of SAR1A or SAR1B with the GATOR2 complex to negatively regulate the TORC1 signaling upon leucine deprivation.

Its subcellular location is the lysosome membrane. With respect to regulation, the GATOR2 complex is negatively regulated by the upstream amino acid sensors CASTOR1 and SESN2, which sequester the GATOR2 complex in absence of amino acids. In the presence of abundant amino acids, GATOR2 is released from CASTOR1 and SESN2 and activated. Its function is as follows. As a component of the GATOR2 complex, functions as an activator of the amino acid-sensing branch of the mTORC1 signaling pathway. The GATOR2 complex indirectly activates mTORC1 through the inhibition of the GATOR1 subcomplex. GATOR2 probably acts as an E3 ubiquitin-protein ligase toward GATOR1. In the presence of abundant amino acids, the GATOR2 complex mediates ubiquitination of the NPRL2 core component of the GATOR1 complex, leading to GATOR1 inactivation. In the absence of amino acids, GATOR2 is inhibited, activating the GATOR1 complex. Within the GATOR2 complex, MIOS is required to prevent autoubiquitination of WDR24, the catalytic subunit of the complex. The GATOR2 complex is required for brain myelination. The polypeptide is GATOR2 complex protein MIOS (Pongo abelii (Sumatran orangutan)).